We begin with the raw amino-acid sequence, 441 residues long: Proline--tRNA ligase (441 aa).

This sequence belongs to the class-II aminoacyl-tRNA synthetase family. ProS type 2 subfamily. Homodimer.

The protein resides in the cytoplasm. The catalysed reaction is tRNA(Pro) + L-proline + ATP = L-prolyl-tRNA(Pro) + AMP + diphosphate. Its function is as follows. Catalyzes the attachment of proline to tRNA(Pro) in a two-step reaction: proline is first activated by ATP to form Pro-AMP and then transferred to the acceptor end of tRNA(Pro). The chain is Proline--tRNA ligase from Bartonella tribocorum (strain CIP 105476 / IBS 506).